Here is a 346-residue protein sequence, read N- to C-terminus: Holliday junction branch migration complex subunit RuvB (346 aa).

Residues 1-182 (MSEPARLISP…FGIPVRLSFY (182 aa)) are large ATPase domain (RuvB-L). ATP contacts are provided by residues L21, R22, G63, K66, T67, T68, 129–131 (EDF), R172, Y182, and R219. Residue T67 coordinates Mg(2+). A small ATPAse domain (RuvB-S) region spans residues 183–253 (TVEELELIVR…IADEALTRLL (71 aa)). The tract at residues 256-346 (NVGFDQLDKR…AQFRLFQEDD (91 aa)) is head domain (RuvB-H). 3 residues coordinate DNA: R292, R311, and R316.

Belongs to the RuvB family. In terms of assembly, homohexamer. Forms an RuvA(8)-RuvB(12)-Holliday junction (HJ) complex. HJ DNA is sandwiched between 2 RuvA tetramers; dsDNA enters through RuvA and exits via RuvB. An RuvB hexamer assembles on each DNA strand where it exits the tetramer. Each RuvB hexamer is contacted by two RuvA subunits (via domain III) on 2 adjacent RuvB subunits; this complex drives branch migration. In the full resolvosome a probable DNA-RuvA(4)-RuvB(12)-RuvC(2) complex forms which resolves the HJ.

The protein localises to the cytoplasm. The enzyme catalyses ATP + H2O = ADP + phosphate + H(+). Functionally, the RuvA-RuvB-RuvC complex processes Holliday junction (HJ) DNA during genetic recombination and DNA repair, while the RuvA-RuvB complex plays an important role in the rescue of blocked DNA replication forks via replication fork reversal (RFR). RuvA specifically binds to HJ cruciform DNA, conferring on it an open structure. The RuvB hexamer acts as an ATP-dependent pump, pulling dsDNA into and through the RuvAB complex. RuvB forms 2 homohexamers on either side of HJ DNA bound by 1 or 2 RuvA tetramers; 4 subunits per hexamer contact DNA at a time. Coordinated motions by a converter formed by DNA-disengaged RuvB subunits stimulates ATP hydrolysis and nucleotide exchange. Immobilization of the converter enables RuvB to convert the ATP-contained energy into a lever motion, pulling 2 nucleotides of DNA out of the RuvA tetramer per ATP hydrolyzed, thus driving DNA branch migration. The RuvB motors rotate together with the DNA substrate, which together with the progressing nucleotide cycle form the mechanistic basis for DNA recombination by continuous HJ branch migration. Branch migration allows RuvC to scan DNA until it finds its consensus sequence, where it cleaves and resolves cruciform DNA. This Rhizobium etli (strain CIAT 652) protein is Holliday junction branch migration complex subunit RuvB.